Consider the following 393-residue polypeptide: NAD(P)H-quinone oxidoreductase subunit H, chloroplastic (393 aa).

It belongs to the complex I 49 kDa subunit family. NDH is composed of at least 16 different subunits, 5 of which are encoded in the nucleus.

The protein resides in the plastid. Its subcellular location is the chloroplast thylakoid membrane. The catalysed reaction is a plastoquinone + NADH + (n+1) H(+)(in) = a plastoquinol + NAD(+) + n H(+)(out). The enzyme catalyses a plastoquinone + NADPH + (n+1) H(+)(in) = a plastoquinol + NADP(+) + n H(+)(out). In terms of biological role, NDH shuttles electrons from NAD(P)H:plastoquinone, via FMN and iron-sulfur (Fe-S) centers, to quinones in the photosynthetic chain and possibly in a chloroplast respiratory chain. The immediate electron acceptor for the enzyme in this species is believed to be plastoquinone. Couples the redox reaction to proton translocation, and thus conserves the redox energy in a proton gradient. In Acorus calamus var. americanus (American sweet flag), this protein is NAD(P)H-quinone oxidoreductase subunit H, chloroplastic.